The sequence spans 286 residues: Phosphoribosylaminoimidazole-succinocarboxamide synthase (286 aa).

Belongs to the SAICAR synthetase family.

It carries out the reaction 5-amino-1-(5-phospho-D-ribosyl)imidazole-4-carboxylate + L-aspartate + ATP = (2S)-2-[5-amino-1-(5-phospho-beta-D-ribosyl)imidazole-4-carboxamido]succinate + ADP + phosphate + 2 H(+). It functions in the pathway purine metabolism; IMP biosynthesis via de novo pathway; 5-amino-1-(5-phospho-D-ribosyl)imidazole-4-carboxamide from 5-amino-1-(5-phospho-D-ribosyl)imidazole-4-carboxylate: step 1/2. The sequence is that of Phosphoribosylaminoimidazole-succinocarboxamide synthase from Actinobacillus succinogenes (strain ATCC 55618 / DSM 22257 / CCUG 43843 / 130Z).